Consider the following 226-residue polypeptide: Transmembrane gamma-carboxyglutamic acid protein 4 (226 aa).

Residues Met-1–Ala-17 form the signal peptide. Positions Val-18 to Arg-49 are excised as a propeptide. The Extracellular segment spans residues Leu-50–Asp-113. A Gla domain is found at Asn-52–Ile-98. A disulfide bond links Cys-69 and Cys-74. Glu-72 is modified (4-carboxyglutamate). The helical transmembrane segment at Val-114–Val-134 threads the bilayer. Topologically, residues Gly-135–His-226 are cytoplasmic. Residue Ser-164 is modified to Phosphoserine. The short motif at Leu-186–Tyr-189 is the LPXY motif; mediates binding to WW domain-containing proteins element. The PPXY motif; mediates binding to WW domain-containing proteins signature appears at Pro-204 to Tyr-207.

The protein belongs to the commissureless family. In terms of assembly, interacts (via cytoplasmic domain) with WW domain-containing proteins MAGI1, MAGI3, NEDD4, NEDD4L, WWTR1/TAZ and YAP1. In terms of processing, gamma-carboxyglutamate residues are formed by vitamin K dependent carboxylation. These residues are essential for the binding of calcium.

The protein resides in the endoplasmic reticulum-Golgi intermediate compartment membrane. The protein localises to the cell membrane. In terms of biological role, may control axon guidance across the CNS. Prevents the delivery of ROBO1 at the cell surface and down-regulates its expression. This chain is Transmembrane gamma-carboxyglutamic acid protein 4 (Prrg4), found in Mus musculus (Mouse).